Consider the following 737-residue polypeptide: METTAAATAAERRRPLFTTEELGGRAVYRVQAATVAAGILLVLYYRATRVPAAGEGRAAWLGMAAAELWFAVYWVIAQSVRWRPFRRRTFRDRLAERYEQNLPGVDIFVCTADPQSEPPSLVISTILSVMAYNYPSEKISVYLSDDGGSILTFYALWEASIFAKKWLPFCKRYNIEPRSPAAYFSESKVHHNLCIPKEWALIKNLYEEMRERIDTATMSGKIPEEMKLKHKGFDEWNSDFTLKNHQPIVQILIDGKNRNAIDDDRNVLPTMVYVAREKRPQYHHNFKAGALNALIRVSSVISDSPVILNVDCDMYSNNSDSIRDALCFFLDEEMGQKIGFVQYPQIFNNMTQNDIYGNSFNVSYHVEMCGLDSVGGCLYIGTGCFHRREILCGRIFSKDYKENWNRGIKERGKENINEIEEKATSLVTCTYEHRTQWGNDIGVKYGFPAEDIITGLAIHCRGWESAFINPKRAAFLGLAPSTLAQNILQHKRWSEGNLTIFLSKYCSFLFGHGKIKLQLQMGYCICGLWAANSLPTLYYVVIPSLGLVKGTPLFPQIMSPWATPFIYVFCVKTLYGLYEALLSGDTLKGWWNGQRMWMVKSITSYLYGFIDTIRKCVGMSKMSFEVTAKVSGHDEAKRYEQEILEFGSSSPEYVIIATVALLNFVCLVGGLSQIMAGVWNMPWNVFLPQAILCGMIVIINMPIYEAMFLRKDNGRIPTAVTLASIGFVMLAFLVPIV.

2 helical membrane-spanning segments follow: residues 26-45 and 58-78; these read AVYR…VLYY and AAWL…VIAQ. Residues D146 and D451 contribute to the active site. The next 5 helical transmembrane spans lie at 528–548, 551–571, 654–674, 683–703, and 716–736; these read LWAA…LGLV, TPLF…VFCV, VIIA…LSQI, WNVF…NMPI, and IPTA…LVPI.

The protein belongs to the glycosyltransferase 2 family. Plant cellulose synthase-like E subfamily.

Its subcellular location is the golgi apparatus membrane. In terms of biological role, thought to be a Golgi-localized beta-glycan synthase that polymerize the backbones of noncellulosic polysaccharides (hemicelluloses) of plant cell wall. This is Cellulose synthase-like protein E1 (CSLE1) from Oryza sativa subsp. japonica (Rice).